The following is a 345-amino-acid chain: Probable dual-specificity RNA methyltransferase RlmN (345 aa).

Residue Glu-98 is the Proton acceptor of the active site. Residues 104-332 (TYKRLTVCVS…VSIRYSRGLE (229 aa)) form the Radical SAM core domain. Cysteines 111 and 337 form a disulfide. 3 residues coordinate [4Fe-4S] cluster: Cys-118, Cys-122, and Cys-125. S-adenosyl-L-methionine contacts are provided by residues 165–166 (GE), Ser-195, 218–220 (SLH), and Asn-294. Residue Cys-337 is the S-methylcysteine intermediate of the active site.

The protein belongs to the radical SAM superfamily. RlmN family. [4Fe-4S] cluster serves as cofactor.

It localises to the cytoplasm. The enzyme catalyses adenosine(2503) in 23S rRNA + 2 reduced [2Fe-2S]-[ferredoxin] + 2 S-adenosyl-L-methionine = 2-methyladenosine(2503) in 23S rRNA + 5'-deoxyadenosine + L-methionine + 2 oxidized [2Fe-2S]-[ferredoxin] + S-adenosyl-L-homocysteine. It catalyses the reaction adenosine(37) in tRNA + 2 reduced [2Fe-2S]-[ferredoxin] + 2 S-adenosyl-L-methionine = 2-methyladenosine(37) in tRNA + 5'-deoxyadenosine + L-methionine + 2 oxidized [2Fe-2S]-[ferredoxin] + S-adenosyl-L-homocysteine. Its function is as follows. Specifically methylates position 2 of adenine 2503 in 23S rRNA and position 2 of adenine 37 in tRNAs. The sequence is that of Probable dual-specificity RNA methyltransferase RlmN from Trichodesmium erythraeum (strain IMS101).